We begin with the raw amino-acid sequence, 396 residues long: Ribosomal RNA large subunit methyltransferase I (396 aa).

A PUA domain is found at 2-81 (SVRLVLTKGR…ETIDIAFFTR (80 aa)).

This sequence belongs to the methyltransferase superfamily. RlmI family.

The protein localises to the cytoplasm. It catalyses the reaction cytidine(1962) in 23S rRNA + S-adenosyl-L-methionine = 5-methylcytidine(1962) in 23S rRNA + S-adenosyl-L-homocysteine + H(+). In terms of biological role, specifically methylates the cytosine at position 1962 (m5C1962) of 23S rRNA. The protein is Ribosomal RNA large subunit methyltransferase I of Enterobacter sp. (strain 638).